An 85-amino-acid polypeptide reads, in one-letter code: Probable oxaloacetate decarboxylase gamma chain (85 aa).

A helical transmembrane segment spans residues 11–33 (AAALMVTGMGVVFIFLTILIFLV).

Belongs to the OadG family. As to quaternary structure, heterotrimer of an alpha, a beta and a gamma subunit. The cofactor is Na(+).

It localises to the cell membrane. The catalysed reaction is oxaloacetate + 2 Na(+)(in) + H(+) = pyruvate + 2 Na(+)(out) + CO2. Its function is as follows. Catalyzes the decarboxylation of oxaloacetate coupled to Na(+) translocation. In Vibrio vulnificus (strain CMCP6), this protein is Probable oxaloacetate decarboxylase gamma chain.